Consider the following 160-residue polypeptide: UPF0260 protein Rleg2_0895 (160 aa).

It belongs to the UPF0260 family.

The sequence is that of UPF0260 protein Rleg2_0895 from Rhizobium leguminosarum bv. trifolii (strain WSM2304).